A 382-amino-acid polypeptide reads, in one-letter code: 4-hydroxy-3-methylbut-2-en-1-yl diphosphate synthase (flavodoxin) (382 aa).

[4Fe-4S] cluster-binding residues include Cys273, Cys276, Cys308, and Glu315.

This sequence belongs to the IspG family. It depends on [4Fe-4S] cluster as a cofactor.

It carries out the reaction (2E)-4-hydroxy-3-methylbut-2-enyl diphosphate + oxidized [flavodoxin] + H2O + 2 H(+) = 2-C-methyl-D-erythritol 2,4-cyclic diphosphate + reduced [flavodoxin]. It functions in the pathway isoprenoid biosynthesis; isopentenyl diphosphate biosynthesis via DXP pathway; isopentenyl diphosphate from 1-deoxy-D-xylulose 5-phosphate: step 5/6. Functionally, converts 2C-methyl-D-erythritol 2,4-cyclodiphosphate (ME-2,4cPP) into 1-hydroxy-2-methyl-2-(E)-butenyl 4-diphosphate. This is 4-hydroxy-3-methylbut-2-en-1-yl diphosphate synthase (flavodoxin) from Gluconacetobacter diazotrophicus (strain ATCC 49037 / DSM 5601 / CCUG 37298 / CIP 103539 / LMG 7603 / PAl5).